The sequence spans 347 residues: Tetracycline resistance determinant (347 aa).

Helical transmembrane passes span 3–20, 30–52, 73–95, 108–130, 137–156, 161–183, 204–226, and 294–316; these read VLGA…LIVA, SPAA…PVEL, CSAV…PLFL, LVVI…LIAS, LAIV…ATTG, MWGI…TVIT, CAGQ…AVAL, and GFHI…TWFL. The segment at 321–347 is disordered; it reads EETAPEEERPAESGAGAKNGPLPASDA.

The protein belongs to the major facilitator superfamily. TCR/Tet family.

The protein localises to the cell membrane. Functionally, resistance to tetracycline by an active tetracycline efflux. This is an energy-dependent process that decreases the accumulation of the antibiotic in whole cells. This protein functions as a metal-tetracycline/H(+) antiporter. This is Tetracycline resistance determinant (tetB) from Streptomyces rimosus.